A 794-amino-acid chain; its full sequence is 6-hydroxypseudooxynicotine dehydrogenase complex subunit gamma (794 aa).

In terms of assembly, heterohexamer of 2 alpha (kdhA), 2 beta (kdhB) and 2 gamma (kdhC) subunit. Dimer of heterotrimers. It depends on Mo-molybdopterin cytosine dinucleotide as a cofactor.

The enzyme catalyses 6-hydroxypseudooxynicotine + A + H2O = 2,6-dihydroxypseudooxynicotine + AH2. The protein operates within alkaloid degradation; nicotine degradation. Functionally, molybdo-flavoprotein enzyme complex involved in nicotine degradation. The subunit gamma (large subunit) contains the substrate-binding sites, the subunit alpha (medium subunit) binds FAD and the subunit beta (small subunit) has a 2Fe-2S ferredoxin-type domain which binds 2 2Fe-2S clusters. This is 6-hydroxypseudooxynicotine dehydrogenase complex subunit gamma (kdhC) from Paenarthrobacter nicotinovorans (Arthrobacter nicotinovorans).